The following is a 286-amino-acid chain: Dioxygenase trt7 (286 aa).

The Fe cation site is built by H129, D131, and H206.

Belongs to the PhyH family. In terms of assembly, homodimer. Requires Fe cation as cofactor.

Its pathway is secondary metabolite biosynthesis; terpenoid biosynthesis. Dioxygenase; part of the gene cluster that mediates the biosynthesis of terretonin, a fungal meroterpenoid that acts as a mycotoxin. The first step of the pathway is the synthesis of 3,5-dimethylorsellinic acid (DMOA) by the polyketide synthase trt4. DMOA is then prenylated into farnesyl-DMOA by the polyprenyl transferase trt2. Methylation by the methyltransferase trt5 then leads to farnesyl-DMOA methyl ester which is further subject to epoxidation by the FAD-dependent monooxygenase trt8 to yield epoxyfarnesyl-DMOA methyl ester. Cyclization of epoxyfarnesyl-DMOA methyl ester by the terpene cyclase trt1 leads to a tetracycle intermediate which is in turn converted to preterretonin. Dehydrogenase trt9 comes next to transform preterretonin to preterrenoid. The FAD-dependent monooxygenase trt3 is then required for the C-hydroxylation at C16 of preterrenoid to yield terrenoid. The cytochrome P450 trt6 catalyzes three successive oxidations to transform terrenoid into an unstable intermediate, which then undergoes the D-ring expansion and unusual rearrangement of the methoxy group to afford the core skeleton of terretonin. Trt14 catalyzes the D-ring expansion of terretonin involving intramolecular methoxy rearrangement as well as the hydrolysis of the expanded D-ring and the methyl ester moiety. Finally, the nonheme iron-dependent dioxygenase trt7 accomplishes the last two oxidation reactions steps to complete the biosynthesis of terretonin. Terretonin C is produced via spontaneous decarboxylation of the terretonin precursor. Another shunt product of the terretonin biosynthesis is dihydrofarnesyl-DMOA, derived from epoxyfarnesyl-DMOA through hydrolysis of the epoxide. This chain is Dioxygenase trt7, found in Aspergillus terreus (strain NIH 2624 / FGSC A1156).